A 4226-amino-acid chain; its full sequence is Guanylate cyclase alpha (4226 aa).

At 1-104 (MSDSKKHYNE…SFIFKGLYEQ (104 aa)) the chain is on the cytoplasmic side. The helical transmembrane segment at 105–125 (FLRLPNIWFLLISLLEFIPQY) threads the bilayer. Residues 126–131 (QNLSNY) lie on the Extracellular side of the membrane. The N-linked (GlcNAc...) asparagine glycan is linked to asparagine 127. The chain crosses the membrane as a helical span at residues 132–152 (MYYSKHSSFFLLLFFICVSII). The Cytoplasmic portion of the chain corresponds to 153–337 (KNIYEDSRRS…LGYVNKELNS (185 aa)). Residues 338 to 358 (YTIIGLIFTFICVFISVLFKW) traverse the membrane as a helical segment. Topologically, residues 359-392 (TEDDKFRNGSHFFLITVKDNICESIVKYTLLYSN) are extracellular. Residue asparagine 366 is glycosylated (N-linked (GlcNAc...) asparagine). A helical membrane pass occupies residues 393–413 (IIPISILISVDLISILQSILI). Over 414 to 2083 (ENDNHISTFE…FIYGSKHLYT (1670 aa)) the chain is Cytoplasmic. 4 disordered regions span residues 552-572 (EHSQ…NNIC), 832-904 (SSKN…SNND), 968-989 (INNN…KSSS), and 1740-1765 (NINK…NNSN). Residues 558 to 570 (DNNNNNDNNNNNN) show a composition bias toward low complexity. Positions 838–847 (TLDDPTELIS) are enriched in acidic residues. Residues 854–873 (LRDKYEHTSDKKNDTNKNRD) show a composition bias toward basic and acidic residues. A compositionally biased stretch (low complexity) spans 874-904 (GANNSNNNNNKDVSNNKNKNNNNYNYNSNND). Residues 1745–1754 (YKYDKNDKHN) show a composition bias toward basic and acidic residues. The segment covering 1755–1765 (NNNNNNNNNSN) has biased composition (low complexity). Residues 2084–2104 (ISIILYWNFFKNILLILPIFF) form a helical membrane-spanning segment. Over 2105 to 2119 (YQAYASWSCVKIYPE) the chain is Extracellular. Residues 2120–2140 (LLYTFFSIFWVFIPIIYYMFL) form a helical membrane-spanning segment. At 2141 to 2169 (QHNLNYDILYNIPLFYALSRRRYNMNCFK) the chain is on the cytoplasmic side. A helical transmembrane segment spans residues 2170-2190 (FLPWIFEAIFYSMIIYFFAYA). The Extracellular segment spans residues 2191–2202 (ALKENSHLNNGE). Residues 2203–2223 (VITINTFGNICFIGCLLISIL) form a helical membrane-spanning segment. Topologically, residues 2224–2235 (RLFLEGSLWSPS) are cytoplasmic. The helical transmembrane segment at 2236–2256 (ILITCFGCFLFVFFPSLLFIC) threads the bilayer. Over 2257-2275 (FAYLSNEYIREVFRQTFLW) the chain is Extracellular. A helical membrane pass occupies residues 2276 to 2296 (APLYVLLILWFSTCIISYIFI). Topologically, residues 2297-2787 (NFTKSILFPN…QIHKKNKFYK (491 aa)) are cytoplasmic. The tract at residues 2477-2505 (NNDNNNDDNDNDNNNNNNNNDNYNNNDHN) is disordered. A compositionally biased stretch (low complexity) spans 2488–2502 (DNNNNNNNNDNYNNN). Residues 2788–2808 (TFTPWYRFIFLLLGVFFLYVW) traverse the membrane as a helical segment. Residues 2809–2828 (KLESSLSQLWNMPSDASTDV) lie on the Extracellular side of the membrane. A helical transmembrane segment spans residues 2829 to 2849 (FILFLSLLLELVLLAATVTTF). At 2850-2860 (FSNIFIENFNK) the chain is on the cytoplasmic side. Residues 2861–2881 (IISAVVILIITYHVVSYSVTH) traverse the membrane as a helical segment. Residues 2882–2900 (IDGVFQAVLFPLYTFVILR) are Extracellular-facing. A helical transmembrane segment spans residues 2901–2921 (LPFVNAVLCNIIFLGLFIIRF). Residues 2922–2930 (NGDHFLDKK) lie on the Cytoplasmic side of the membrane. A helical membrane pass occupies residues 2931–2951 (GLAHYIPLFIGVDVFVGFVGY). At 2952-3008 (RLEYNQRKNFLLEYSVESSRRKQREILNTMLPPFVVDEMIYSELNEEGIPISLKAED) the chain is on the extracellular side. A helical transmembrane segment spans residues 3009-3029 (ISTVTIIFCDIYDFQNIVASI). The Guanylate cyclase 1 domain maps to 3013–3270 (TIIFCDIYDF…DTVNTASRMK (258 aa)). At 3030–3738 (EPTRLVEVLD…SNINSIEQAL (709 aa)) the chain is on the cytoplasmic side. Disordered regions lie at residues 3077-3150 (EDEL…FEED) and 3201-3230 (DAND…NNKP). Low complexity-rich tracts occupy residues 3083-3098 (NKYS…NYYY) and 3108-3138 (NNNN…NNVN). The segment covering 3140–3150 (SDDDGDFFEED) has biased composition (acidic residues). The segment covering 3201–3220 (DANDDTHNVNDSFNNDKAEN) has biased composition (basic and acidic residues). The helical transmembrane segment at 3739–3759 (IIFLVTFVMQTLISSTVSIVF) threads the bilayer. Topologically, residues 3760-3773 (IDHKRATQTLHINY) are extracellular. Residues 3774–3794 (FAYWSVRSVYTFFGFVLWLLF) form a helical membrane-spanning segment. Residues 3795–3811 (HYRTRPEVSSLLNIKWM) lie on the Cytoplasmic side of the membrane. The chain crosses the membrane as a helical span at residues 3812–3832 (IFFLNLLFISAACVFSIAYLW). At 3833-3840 (AISETDQT) the chain is on the extracellular side. The helical transmembrane segment at 3841–3861 (TSYTIWMTNDTIEFFFYLVIL) threads the bilayer. Over 3862 to 3871 (HHNTGMLFQT) the chain is Cytoplasmic. Residues 3872–3892 (CILVDLLFITMSLTFIATSVV) traverse the membrane as a helical segment. Residue lysine 3893 is a topological domain, extracellular. Residues 3894-3914 (TITTDSTVLLIPWYVAFNLIS) traverse the membrane as a helical segment. Over 3915 to 4226 (TYCKESIDRR…INVNDRQSNL (312 aa)) the chain is Cytoplasmic. The Guanylate cyclase 2 domain maps to 3970–4104 (TFLFADICGF…IDVLTGNLME (135 aa)). Mg(2+) contacts are provided by aspartate 3975, isoleucine 3976, and aspartate 4019.

It in the N-terminal section; belongs to the cation transport ATPase (P-type) (TC 3.A.3) family. Type IV subfamily. The protein in the C-terminal section; belongs to the adenylyl cyclase class-4/guanylyl cyclase family. Mg(2+) is required as a cofactor. Mn(2+) serves as cofactor.

It localises to the cell membrane. The protein localises to the cytoplasmic vesicle membrane. The enzyme catalyses GTP = 3',5'-cyclic GMP + diphosphate. Functionally, catalyzes the synthesis of the second messenger cGMP from GTP. In asexual blood stage schizonts, required for cGMP production which is essential for PKG activation, PKG-dependent Ca(2+) release, and ultimately merozoite egress from host erythrocytes. This Plasmodium falciparum (isolate 3D7) protein is Guanylate cyclase alpha.